Consider the following 203-residue polypeptide: MQNTLQQISIYGRLLGAVFYYEPNDARLTDILTFFRQPNWMQEWEISFDVKTHKKITALIEKGLQQNITEQYQYLFIGPNELPTPPWGSVYLDPECVIFGNSLLALRDFLQQHQIAFQTQQDEPEDHIGLMLMLAAYLAENRPHLLTKFLREHFLTWAYHFLEQLSKIENSDFYQALALLTIKTLQQWQVDLHINVPTVRFYR.

This sequence belongs to the TorD/DmsD family. DmsD subfamily.

In terms of biological role, required for biogenesis/assembly of DMSO reductase, but not for the interaction of the DmsA signal peptide with the Tat system. May be part of a chaperone cascade complex that facilitates a folding-maturation pathway for the substrate protein. The sequence is that of Probable Tat proofreading chaperone DmsD from Haemophilus influenzae (strain ATCC 51907 / DSM 11121 / KW20 / Rd).